The primary structure comprises 535 residues: Probable inorganic phosphate transporter 1-7 (535 aa).

At 1 to 24 (MAGDQLNVLNALDVAKTQWYHFTA) the chain is on the cytoplasmic side. A helical transmembrane segment spans residues 25–45 (IIIAGMGFFTDAYDLFCISLV). Residues 46–70 (TKLLGRIYYHVDGSEKPGTLPPNVS) lie on the Extracellular side of the membrane. Residues 71 to 91 (AAVNGVAFCGTLAGQLFFGWL) form a helical membrane-spanning segment. Residues 92–99 (GDKLGRKK) lie on the Cytoplasmic side of the membrane. Residues 100–120 (VYGMTLMVMVLCSIASGLSFG) traverse the membrane as a helical segment. The Extracellular portion of the chain corresponds to 121 to 131 (SNPKTVMTTLC). Residues 132-152 (FFRFWLGFGIGGDYPLSATIM) traverse the membrane as a helical segment. Residues 153–161 (SEYANKKTR) are Cytoplasmic-facing. The helical transmembrane segment at 162–182 (GAFIAAVFAMQGFGILTGGIF) threads the bilayer. The Extracellular portion of the chain corresponds to 183–211 (AIIVSAAFEAKFPAPTYQIDALASTVPQA). A helical membrane pass occupies residues 212 to 232 (DYVWRIILMVGALPAAMTYYS). Topologically, residues 233–289 (RSKMPETARYTALVAKDAKLAASNMSKVLQVEIEAEQQGTEDKSNSFGLFSKEFMKR) are cytoplasmic. Residues 290–310 (HGLHLLGTTSTWFLLDIAFYS) form a helical membrane-spanning segment. Residues 311-345 (QNLFQKDIFSAIGWIPPAQTMNAIQEVFKIARAQT) lie on the Extracellular side of the membrane. A helical membrane pass occupies residues 346–366 (LIALCSTVPGYWFTVAFIDVI). Residues 367-368 (GR) are Cytoplasmic-facing. Residues 369–389 (FAIQMMGFFFMTVFMFALAIP) traverse the membrane as a helical segment. The Extracellular segment spans residues 390–399 (YDHWTHKENR). The helical transmembrane segment at 400 to 420 (IGFVAMYSLTFFFANFGPNAT) threads the bilayer. The Cytoplasmic segment spans residues 421–438 (TFVVPAEIFPARFRSTCH). Residues 439 to 459 (GISAASGKLGAMVGAFGFLYL) traverse the membrane as a helical segment. Topologically, residues 460 to 480 (AQSPDKTKTEHGYPPGIGVKN) are extracellular. The helical transmembrane segment at 481–501 (SLIVLGVVNLLGMVFTLLVPE) threads the bilayer. Residues 502-535 (SKGKSLEEMSGENEQNDESSSSSNNNSNNAVSTA) lie on the Cytoplasmic side of the membrane. Residues 506–535 (SLEEMSGENEQNDESSSSSNNNSNNAVSTA) are disordered. The segment covering 519–535 (ESSSSSNNNSNNAVSTA) has biased composition (low complexity). Phosphoserine is present on Ser520.

It belongs to the major facilitator superfamily. Phosphate:H(+) symporter (TC 2.A.1.9) family. In terms of tissue distribution, mature pollen.

The protein resides in the membrane. In terms of biological role, high-affinity transporter for external inorganic phosphate. This Arabidopsis thaliana (Mouse-ear cress) protein is Probable inorganic phosphate transporter 1-7 (PHT1-7).